The chain runs to 292 residues: Endolysin A (292 aa).

It belongs to the L5likevirus endolysin A protein family.

Endolysin that degrades host peptidoglycans and participates with the holin protein in the sequential events which lead to the programmed host cell lysis releasing the mature viral particles. Once the holin has permeabilized the host cell membrane, the endolysin can reach the periplasm and break down the peptidoglycan layer. This is Endolysin A (10) from Mycobacterium phage L5 (Mycobacteriophage L5).